A 110-amino-acid polypeptide reads, in one-letter code: MQPGGQPDMSALLAQAQQMQQQLMEAQESLANSEVHGQAGGGLVQVTMKGSGEVTSVAIDPKVVDPDDVETLQDLVVGAIADAAKQVTILAHDRLGPLAGGMGGLGIPGL.

It belongs to the YbaB/EbfC family. In terms of assembly, homodimer.

The protein resides in the cytoplasm. The protein localises to the nucleoid. Its function is as follows. Binds to DNA and alters its conformation. May be involved in regulation of gene expression, nucleoid organization and DNA protection. This is Nucleoid-associated protein Mkms_4993 from Mycobacterium sp. (strain KMS).